Reading from the N-terminus, the 645-residue chain is Envelope glycoprotein (645 aa).

The first 33 residues, 1-33 (MESPAFSKPLKDKINPWGPLIIMGILVRAGASV), serve as a signal peptide directing secretion. Residues 32 to 237 (SVQRDSPHQV…QVLNVGPRVP (206 aa)) are receptor-binding domain (RBD). At 34–585 (QRDSPHQVFN…FNRSPWFTTL (552 aa)) the chain is on the extracellular side. Residues Asn43 and Asn58 are each glycosylated (N-linked (GlcNAc...) asparagine; by host). Disulfide bonds link Cys113-Cys130 and Cys122-Cys135. The interval 259–286 (PRPPRPPPSGAASMVPGAPPPSQQPGTG) is disordered. Asn301 carries an N-linked (GlcNAc...) asparagine; by host glycan. Cystine bridges form between Cys311–Cys314, Cys311–Cys538, Cys341–Cys395, Cys360–Cys372, Cys402–Cys415, and Cys530–Cys537. A CXXC motif is present at residues 311–314 (CWLC). Residues Asn333 and Asn340 are each glycosylated (N-linked (GlcNAc...) asparagine; by host). N-linked (GlcNAc...) asparagine; by host glycosylation is found at Asn373 and Asn409. Residues 447 to 467 (VSLTLALLLGGLTMGGIAAGV) form a fusion peptide region. A coiled-coil region spans residues 490–510 (DLGALEKSVSALEKSLTSLSE). Residues 513–529 (LQNRRGLDLLFLKEGGL) are immunosuppression. Positions 530-538 (CAALKKECC) match the CX6CC motif. Residues 586-606 (ISTIMGPLIVLLLILLFGPCI) traverse the membrane as a helical segment. Cys605 carries the S-palmitoyl cysteine; by host lipid modification. Residues 607–640 (LNRLVQFVKDRISVVQALVLTQQYHQLKSIDPEE) lie on the Cytoplasmic side of the membrane. A YXXL motif; contains endocytosis signal motif is present at residues 630–633 (YHQL).

As to quaternary structure, the mature envelope protein (Env) consists of a trimer of SU-TM heterodimers attached by a labile interchain disulfide bond. The activated Env consists of SU monomers and TM trimers. In terms of processing, specific enzymatic cleavages in vivo yield mature proteins. Envelope glycoproteins are synthesized as an inactive precursor that is N-glycosylated and processed likely by host cell furin or by a furin-like protease in the Golgi to yield the mature SU and TM proteins. The cleavage site between SU and TM requires the minimal sequence [KR]-X-[KR]-R. The R-peptide is released from the C-terminus of the cytoplasmic tail of the TM protein upon particle formation as a result of proteolytic cleavage by the viral protease. Cleavage of this peptide is required for TM to become fusogenic. Post-translationally, the CXXC motif is highly conserved across a broad range of retroviral envelope proteins. It is thought to participate in the formation of a labile disulfide bond possibly with the CX6CC motif present in the transmembrane protein. Isomerization of the intersubunit disulfide bond to an SU intrachain disulfide bond is thought to occur upon receptor recognition in order to allow membrane fusion. The transmembrane protein is palmitoylated. In terms of processing, the R-peptide is palmitoylated.

The protein localises to the virion membrane. Its subcellular location is the host cell membrane. Functionally, the surface protein (SU) attaches the virus to the host cell by binding to its receptor. This interaction activates a thiol in a CXXC motif of the C-terminal domain, where the other Cys residue participates in the formation of the intersubunit disulfide. The activated thiol will attack the disulfide and cause its isomerization into a disulfide isomer within the motif. This leads to SU displacement and TM refolding, and is thought to activate its fusogenic potential by unmasking its fusion peptide. Fusion occurs at the host cell plasma membrane. Its function is as follows. The transmembrane protein (TM) acts as a class I viral fusion protein. Under the current model, the protein has at least 3 conformational states: pre-fusion native state, pre-hairpin intermediate state, and post-fusion hairpin state. During viral and target cell membrane fusion, the coiled coil regions (heptad repeats) assume a trimer-of-hairpins structure, positioning the fusion peptide in close proximity to the C-terminal region of the ectodomain. The formation of this structure appears to drive apposition and subsequent fusion of viral and target cell membranes. Membranes fusion leads to delivery of the nucleocapsid into the cytoplasm. The polypeptide is Envelope glycoprotein (env) (Xenotropic MuLV-related virus (isolate VP35) (XMRV)).